Consider the following 219-residue polypeptide: UPF0126 membrane protein SCO5481 (219 aa).

6 helical membrane passes run 10 to 30 (VQHTLDLVGIFVFAISGALLA), 34 to 54 (NFDVFGIAVLAEVTALGGGLF), 66 to 86 (AFTDLGYFLTPLLATLLVFFL), 93 to 113 (LQTGVNIFDAAGLGLFCVAGT), 120 to 140 (GLGLTASACLGLTTAVGGGVL), and 158 to 178 (LYAVPAIVGSAMVALCIRYEA).

This sequence belongs to the UPF0126 family.

The protein resides in the cell membrane. The polypeptide is UPF0126 membrane protein SCO5481 (Streptomyces coelicolor (strain ATCC BAA-471 / A3(2) / M145)).